The sequence spans 304 residues: Lipid droplet-associated triacylglycerol lipase (304 aa).

The Lumenal segment spans residues 1–155 (MTVKEYTKSK…MGIKMTAALR (155 aa)). The N-linked (GlcNAc...) asparagine glycan is linked to N95. Positions 107 to 111 (GHSVG) match the GXSXG motif. The Nucleophile role is filled by S109. The stretch at 156-176 (YIPPLAHVVSLFSYIFFYWIL) is an intramembrane region. At 177 to 304 (SEGFSRFIID…HAEYAINAFF (128 aa)) the chain is on the lumenal side.

This sequence belongs to the AB hydrolase superfamily. LDAH family.

Its subcellular location is the lipid droplet. It localises to the membrane. It carries out the reaction a triacylglycerol + H2O = a diacylglycerol + a fatty acid + H(+). Its function is as follows. Shows both triacylglycerol (TAG) lipase and ester hydrolase activities. May play a role in TAG homeostasis. The protein is Lipid droplet-associated triacylglycerol lipase of Saccharomyces cerevisiae (strain ATCC 204508 / S288c) (Baker's yeast).